We begin with the raw amino-acid sequence, 302 residues long: Succinate--CoA ligase [ADP-forming] subunit alpha (302 aa).

CoA is bound by residues 17–20 (TGST), lysine 43, and 96–98 (ITE). Residue tyrosine 159 coordinates substrate. Catalysis depends on histidine 247, which acts as the Tele-phosphohistidine intermediate.

The protein belongs to the succinate/malate CoA ligase alpha subunit family. Heterotetramer of two alpha and two beta subunits.

The catalysed reaction is succinate + ATP + CoA = succinyl-CoA + ADP + phosphate. It carries out the reaction GTP + succinate + CoA = succinyl-CoA + GDP + phosphate. The protein operates within carbohydrate metabolism; tricarboxylic acid cycle; succinate from succinyl-CoA (ligase route): step 1/1. In terms of biological role, succinyl-CoA synthetase functions in the citric acid cycle (TCA), coupling the hydrolysis of succinyl-CoA to the synthesis of either ATP or GTP and thus represents the only step of substrate-level phosphorylation in the TCA. The alpha subunit of the enzyme binds the substrates coenzyme A and phosphate, while succinate binding and nucleotide specificity is provided by the beta subunit. This is Succinate--CoA ligase [ADP-forming] subunit alpha from Staphylococcus epidermidis (strain ATCC 35984 / DSM 28319 / BCRC 17069 / CCUG 31568 / BM 3577 / RP62A).